A 63-amino-acid polypeptide reads, in one-letter code: Gallinacin-4 (63 aa).

The N-terminal stretch at M1–V19 is a signal peptide. Positions G20–P25 are excised as a propeptide. Disulfide bonds link C31/C59, C38/C53, and C43/C60.

This sequence belongs to the beta-defensin family. As to expression, strong expression in the bone marrow and testis. Widely expressed. Weak expression in the ovarian stroma, but not expressed in the ovarian follicles.

The protein resides in the secreted. It localises to the cytoplasmic granule. Functionally, has bactericidal activity. Potent activity against S.typhimurium and S.entiriditis. The polypeptide is Gallinacin-4 (GAL4) (Gallus gallus (Chicken)).